A 244-amino-acid polypeptide reads, in one-letter code: MFLVPLLAALSLSAPKVAAHGGVLAYSLAGTWYNGFVPYNTPTGQSTIQREWDTYNPITDPTDASISCNINGASLGSAQKSATVAAGSSVTAYWNQWPHTIGPVMVYMANCGGDCTTATTSSLEWFKINQVGLVSGTLTSGTWGMGQLVANNNSWTTSIPSSLAAGNYILRHELLAIHTSNQPQFYPECAQLIVTGGEGATPPASYLVKLPGAYSMSDPGVNIDIYSHETETNYTIPGPAVWQG.

The N-terminal stretch at 1-19 is a signal peptide; the sequence is MFLVPLLAALSLSAPKVAA. His-20 serves as a coordination point for Cu(2+). Position 39 (Tyr-39) interacts with (1,4-beta-D-glucosyl)n. Intrachain disulfides connect Cys-68/Cys-189 and Cys-111/Cys-115. Residue His-99 participates in Cu(2+) binding. Residue Asn-152 is glycosylated (N-linked (GlcNAc...) asparagine). O2-binding residues include His-178 and Gln-184. Tyr-186 serves as a coordination point for Cu(2+). Positions 224, 226, and 229 each coordinate (1,4-beta-D-glucosyl)n. The N-linked (GlcNAc...) asparagine glycan is linked to Asn-233.

Belongs to the polysaccharide monooxygenase AA9 family. Cu(2+) serves as cofactor.

It localises to the secreted. It carries out the reaction [(1-&gt;4)-beta-D-glucosyl]n+m + reduced acceptor + O2 = 4-dehydro-beta-D-glucosyl-[(1-&gt;4)-beta-D-glucosyl]n-1 + [(1-&gt;4)-beta-D-glucosyl]m + acceptor + H2O.. In terms of biological role, lytic polysaccharide monooxygenase (LPMO) that depolymerizes crystalline and amorphous polysaccharides via the oxidation of scissile alpha- or beta-(1-4)-glycosidic bonds, yielding specifically C1 oxidation product. Catalysis by LPMOs requires the reduction of the active-site copper from Cu(II) to Cu(I) by a reducing agent and H(2)O(2) or O(2) as a cosubstrate. Displays catalytic activity on insoluble cellulose using I-beta microfibril model substrate. The protein is AA9 family lytic polysaccharide monooxygenase B of Heterobasidion irregulare (strain TC 32-1).